A 338-amino-acid chain; its full sequence is 4-hydroxythreonine-4-phosphate dehydrogenase (338 aa).

His139 and Thr140 together coordinate substrate. A divalent metal cation-binding residues include His169, His214, and His270. Residues Lys278, Asn287, and Arg296 each contribute to the substrate site.

Belongs to the PdxA family. In terms of assembly, homodimer. Zn(2+) is required as a cofactor. It depends on Mg(2+) as a cofactor. The cofactor is Co(2+).

It is found in the cytoplasm. It catalyses the reaction 4-(phosphooxy)-L-threonine + NAD(+) = 3-amino-2-oxopropyl phosphate + CO2 + NADH. It functions in the pathway cofactor biosynthesis; pyridoxine 5'-phosphate biosynthesis; pyridoxine 5'-phosphate from D-erythrose 4-phosphate: step 4/5. Its function is as follows. Catalyzes the NAD(P)-dependent oxidation of 4-(phosphooxy)-L-threonine (HTP) into 2-amino-3-oxo-4-(phosphooxy)butyric acid which spontaneously decarboxylates to form 3-amino-2-oxopropyl phosphate (AHAP). The chain is 4-hydroxythreonine-4-phosphate dehydrogenase from Desulfosudis oleivorans (strain DSM 6200 / JCM 39069 / Hxd3) (Desulfococcus oleovorans).